We begin with the raw amino-acid sequence, 376 residues long: Transcription initiation factor IIA subunit 1 (376 aa).

Alanine 2 is subject to N-acetylalanine. 2 stretches are compositionally biased toward low complexity: residues 69 to 79 (QVQQQHQPQQQ) and 89 to 105 (QAQP…TQQV). Disordered regions lie at residues 69–107 (QVQQ…QVLI), 246–265 (AQAQ…PAQT), and 274–329 (DGTG…QELF). Residues serine 280, serine 281, serine 316, and serine 321 each carry the phosphoserine; by TAF1 modification. Positions 280–329 (SSEEDEDEEEDYDDDEEEDKEKDGAEDGQVEEEPLNSEDDVSDEEGQELF) are enriched in acidic residues. Positions 343 and 344 each coordinate DNA.

The protein belongs to the TFIIA subunit 1 family. TFIIA is a heterodimer of the large unprocessed subunit 1 and a small subunit gamma. It was originally believed to be a heterotrimer of an alpha (p35), a beta (p19) and a gamma subunit (p12). TFIIA forms a complex with TBP. Part of TBP-based Pol II pre-initiation complex (PIC), in which Pol II core assembles with general transcription factors and other specific initiation factors including GTF2E1, GTF2E2, GTF2F1, GTF2F2, TCEA1, ERCC2, ERCC3, GTF2H2, GTF2H3, GTF2H4, GTF2H5, GTF2A1, GTF2A2, GTF2B and TBP; this large multi-subunit PIC complex mediates DNA unwinding and targets Pol II core to the transcription start site where the first phosphodiester bond forms. The alpha and beta subunits are postranslationally produced from the precursor formby TASP1. The cleavage promotes proteasomal degradation.

It is found in the nucleus. Functionally, TFIIA is a component of the transcription machinery of RNA polymerase II and plays an important role in transcriptional activation. TFIIA in a complex with TBP mediates transcriptional activity. The sequence is that of Transcription initiation factor IIA subunit 1 (GTF2A1) from Pongo abelii (Sumatran orangutan).